Here is a 461-residue protein sequence, read N- to C-terminus: 3-oxoacyl-[acyl-carrier-protein] synthase, mitochondrial (461 aa).

A mitochondrion-targeting transit peptide spans 1–28 (MATSNLRRHLSASRLRLNRFISTSSSYH). In terms of domain architecture, Ketosynthase family 3 (KS3) spans 30–460 (HRRVVVTGLG…GTNASLLFAS (431 aa)). Active-site for beta-ketoacyl synthase activity residues include Cys-209, His-350, and His-389.

Belongs to the thiolase-like superfamily. Beta-ketoacyl-ACP synthases family. Homodimer. Expressed at the same level in leaves, roots, siliques and flowers.

The protein localises to the mitochondrion. The catalysed reaction is a fatty acyl-[ACP] + malonyl-[ACP] + H(+) = a 3-oxoacyl-[ACP] + holo-[ACP] + CO2. It catalyses the reaction butanoyl-[ACP] + malonyl-[ACP] + H(+) = 3-oxohexanoyl-[ACP] + holo-[ACP] + CO2. It carries out the reaction hexanoyl-[ACP] + malonyl-[ACP] + H(+) = 3-oxooctanoyl-[ACP] + holo-[ACP] + CO2. The enzyme catalyses octanoyl-[ACP] + malonyl-[ACP] + H(+) = 3-oxodecanoyl-[ACP] + holo-[ACP] + CO2. The catalysed reaction is decanoyl-[ACP] + malonyl-[ACP] + H(+) = 3-oxododecanoyl-[ACP] + holo-[ACP] + CO2. It catalyses the reaction dodecanoyl-[ACP] + malonyl-[ACP] + H(+) = 3-oxotetradecanoyl-[ACP] + holo-[ACP] + CO2. It carries out the reaction tetradecanoyl-[ACP] + malonyl-[ACP] + H(+) = 3-oxohexadecanoyl-[ACP] + holo-[ACP] + CO2. The enzyme catalyses hexadecanoyl-[ACP] + malonyl-[ACP] + H(+) = 3-oxooctadecanoyl-[ACP] + holo-[ACP] + CO2. It participates in lipid metabolism; fatty acid biosynthesis. Inhibited by cerulenin. Functionally, catalyzes all the condensation reaction of fatty acid synthesis by the addition to an acyl acceptor of two carbons from malonyl-ACP. Able to elongate saturated acyl chains from 4 to at least 16 carbons. Uses malonyl-CoA but not acetyl-CoA as primer substrate. When expressed in a heterologous system, reveals a bimodal distribution of products, with peaks at C8 and C14-C16. The major product of the reaction (octanoyl-ACP) is required for the lipoylation of essential mitochondrial proteins. Required for mitochondrial fatty acid synthesis (mtFAS). MtFAS are essential for photorespiration and plant development, probably by influencing mitochondrial membrane lipid composition and other lipid metabolic pathways. The sequence is that of 3-oxoacyl-[acyl-carrier-protein] synthase, mitochondrial from Arabidopsis thaliana (Mouse-ear cress).